A 317-amino-acid chain; its full sequence is Acetyl-coenzyme A carboxylase carboxyl transferase subunit beta (317 aa).

Positions 1 to 28 (MANNMTDTMTKPDINNDSTSLQQNGNKA) are disordered. Positions 55–317 (PSTKCSSCHS…LCSVPNVDVQ (263 aa)) constitute a CoA carboxyltransferase N-terminal domain. Zn(2+) contacts are provided by C59, C62, C78, and C81. Residues 59-81 (CSSCHSIITNTALIFNCYVCPHC) form a C4-type zinc finger.

This sequence belongs to the AccD/PCCB family. As to quaternary structure, acetyl-CoA carboxylase is a heterohexamer composed of biotin carboxyl carrier protein (AccB), biotin carboxylase (AccC) and two subunits each of ACCase subunit alpha (AccA) and ACCase subunit beta (AccD). Zn(2+) is required as a cofactor.

It localises to the cytoplasm. It carries out the reaction N(6)-carboxybiotinyl-L-lysyl-[protein] + acetyl-CoA = N(6)-biotinyl-L-lysyl-[protein] + malonyl-CoA. Its pathway is lipid metabolism; malonyl-CoA biosynthesis; malonyl-CoA from acetyl-CoA: step 1/1. Its function is as follows. Component of the acetyl coenzyme A carboxylase (ACC) complex. Biotin carboxylase (BC) catalyzes the carboxylation of biotin on its carrier protein (BCCP) and then the CO(2) group is transferred by the transcarboxylase to acetyl-CoA to form malonyl-CoA. The chain is Acetyl-coenzyme A carboxylase carboxyl transferase subunit beta from Psychrobacter cryohalolentis (strain ATCC BAA-1226 / DSM 17306 / VKM B-2378 / K5).